The chain runs to 206 residues: Lipid A acyltransferase PagP (206 aa).

Residues 1 to 22 form the signal peptide; sequence MKQMVCWLTAGLLTLGGLPARA. The segment covering 26 to 46 has biased composition (low complexity); that stretch reads VPAVPETPAAPAAPAVQETPA. Residues 26–50 are disordered; it reads VPAVPETPAAPAAPAVQETPASSAA. Catalysis depends on residues His-80, Asp-123, and Ser-124.

It belongs to the lipid A palmitoyltransferase family. As to quaternary structure, homodimer.

The protein resides in the cell outer membrane. It catalyses the reaction a lipid A + a 1,2-diacyl-sn-glycero-3-phosphocholine = a hepta-acyl lipid A + a 2-acyl-sn-glycero-3-phosphocholine. The catalysed reaction is a lipid IVA + a 1,2-diacyl-sn-glycero-3-phosphocholine = a lipid IVB + a 2-acyl-sn-glycero-3-phosphocholine. The enzyme catalyses a lipid IIA + a 1,2-diacyl-sn-glycero-3-phosphocholine = a lipid IIB + a 2-acyl-sn-glycero-3-phosphocholine. In terms of biological role, transfers a fatty acid residue from the sn-1 position of a phospholipid to the N-linked hydroxyfatty acid chain on the proximal unit of lipid A or its precursors. This is Lipid A acyltransferase PagP from Laribacter hongkongensis (strain HLHK9).